The following is a 508-amino-acid chain: Maturase K (508 aa).

Belongs to the intron maturase 2 family. MatK subfamily.

The protein resides in the plastid. It is found in the chloroplast. In terms of biological role, usually encoded in the trnK tRNA gene intron. Probably assists in splicing its own and other chloroplast group II introns. This Coronilla varia (Crown vetch) protein is Maturase K.